Here is a 98-residue protein sequence, read N- to C-terminus: NADH-ubiquinone oxidoreductase chain 4L (98 aa).

The next 3 helical transmembrane spans lie at 1-21 (MSLIHINIFLAFTVSLMGLLM), 29-49 (SLLCLEGMMLSLFIMATMMVL), and 61-81 (IILLVFAACEAALGLSLLVMI).

It belongs to the complex I subunit 4L family. As to quaternary structure, core subunit of respiratory chain NADH dehydrogenase (Complex I) which is composed of 45 different subunits.

The protein resides in the mitochondrion inner membrane. The enzyme catalyses a ubiquinone + NADH + 5 H(+)(in) = a ubiquinol + NAD(+) + 4 H(+)(out). In terms of biological role, core subunit of the mitochondrial membrane respiratory chain NADH dehydrogenase (Complex I) which catalyzes electron transfer from NADH through the respiratory chain, using ubiquinone as an electron acceptor. Part of the enzyme membrane arm which is embedded in the lipid bilayer and involved in proton translocation. In Rhinoceros unicornis (Greater Indian rhinoceros), this protein is NADH-ubiquinone oxidoreductase chain 4L (MT-ND4L).